The chain runs to 384 residues: FAD-dependent urate hydroxylase (384 aa).

FAD-binding positions include Gly-11, Glu-30–Ala-31, Ser-43, and Val-125. Residues Asn-178, Arg-204, and Tyr-216–Phe-218 each bind substrate. FAD contacts are provided by residues Asp-285 and Gly-295 to Cys-299.

Belongs to the FAD-dependent urate hydroxylase family. In terms of assembly, monomer. The cofactor is FAD.

It carries out the reaction urate + NADH + O2 + H(+) = 5-hydroxyisourate + NAD(+) + H2O. The protein operates within purine metabolism; urate degradation. Catalyzes the hydroxylation of urate to 5-hydroxyisourate (HIU). This Klebsiella pneumoniae subsp. pneumoniae (strain ATCC 700721 / MGH 78578) protein is FAD-dependent urate hydroxylase.